The following is a 211-amino-acid chain: Urease accessory protein UreF (211 aa).

The protein belongs to the UreF family. UreD, UreF and UreG form a complex that acts as a GTP-hydrolysis-dependent molecular chaperone, activating the urease apoprotein by helping to assemble the nickel containing metallocenter of UreC. The UreE protein probably delivers the nickel.

It localises to the cytoplasm. In terms of biological role, required for maturation of urease via the functional incorporation of the urease nickel metallocenter. The sequence is that of Urease accessory protein UreF from Mycobacterium sp. (strain JLS).